The chain runs to 814 residues: Rho GTPase-activating protein 44 (814 aa).

A BAR domain is found at 14–249 (QTVGRAEKTE…IKAQQEAWVE (236 aa)). One can recognise a Rho-GAP domain in the interval 255–445 (KPLEEHLMIS…PIIQHADWFF (191 aa)). Disordered stretches follow at residues 467–493 (ANYS…RPLS), 528–769 (RGSS…MSTD), and 784–814 (STLR…STAL). A compositionally biased stretch (basic and acidic residues) spans 479-489 (PADRRQPEQAR). At serine 493 the chain carries Phosphoserine. Low complexity-rich tracts occupy residues 567 to 581 (SPAT…SGAS), 598 to 612 (SPGS…SIQG), 622 to 637 (PQPA…DQSP), 684 to 704 (SPYG…LSPA), and 741 to 752 (SVSLSASSPQST). The segment at 727–814 (KPRQRPTLPP…SEEESESTAL (88 aa)) is interaction with BST2. Over residues 790 to 805 (PLEHARRHSATDKRDS) the composition is skewed to basic and acidic residues. Serine 805 bears the Phosphoserine mark. The short motif at 811 to 814 (STAL) is the PDZ-binding element.

In terms of assembly, interacts with BST2 (via cytoplasmic domain). Interacts (probably via PDZ-binding motif) with SHANK3 (via PDZ domain); the interaction takes place in dendritic spines and promotes GRIA1 exocytosis. In terms of tissue distribution, specifically expressed in brain (at protein level). Detected in olfactory bulb, cortex, hippocampus, diencephalon and cerebellum (at protein level). Expressed in hippocampal neurons (at protein level).

It localises to the cell projection. The protein localises to the dendritic spine. Its subcellular location is the recycling endosome. The protein resides in the presynapse. It is found in the dendrite. Functionally, GTPase-activating protein (GAP) that stimulates the GTPase activity of Rho-type GTPases. Thereby, controls Rho-type GTPases cycling between their active GTP-bound and inactive GDP-bound states. Acts as a GAP at least for CDC42 and RAC1. In neurons, is involved in dendritic spine formation and synaptic plasticity in a specific RAC1-GAP activity. Limits the initiation of exploratory dendritic filopodia. Recruited to actin-patches that seed filopodia, binds specifically to plasma membrane sections that are deformed inward by acto-myosin mediated contractile forces. Acts through GAP activity on RAC1 to reduce actin polymerization necessary for filopodia formation. In association with SHANK3, promotes GRIA1 exocytosis from recycling endosomes and spine morphological changes associated to long-term potentiation. The sequence is that of Rho GTPase-activating protein 44 from Mus musculus (Mouse).